Reading from the N-terminus, the 208-residue chain is MSSKKRSASSRRWLQEHFNDKYVIEAQKKKLRSRAWFKLDEIDNTDKIFKRGMFVLDLGAAPGGWSQYVVNKVGLKGKVIALDLLPMDSILGVEFLQGDFREKSILKRLLNCIGDKKIDVVISDMAPNMTGISSVDIPKSMHLAELAFDISRDILIPGGSFLVKVFQGEGFEQYLREMRSLFKKVKVRKPDASRIRSREVYIVATGLK.

5 residues coordinate S-adenosyl-L-methionine: G63, W65, D83, D99, and D124. K164 serves as the catalytic Proton acceptor.

Belongs to the class I-like SAM-binding methyltransferase superfamily. RNA methyltransferase RlmE family.

The protein localises to the cytoplasm. The catalysed reaction is uridine(2552) in 23S rRNA + S-adenosyl-L-methionine = 2'-O-methyluridine(2552) in 23S rRNA + S-adenosyl-L-homocysteine + H(+). In terms of biological role, specifically methylates the uridine in position 2552 of 23S rRNA at the 2'-O position of the ribose in the fully assembled 50S ribosomal subunit. This Hamiltonella defensa subsp. Acyrthosiphon pisum (strain 5AT) protein is Ribosomal RNA large subunit methyltransferase E.